The sequence spans 161 residues: Regulator of ribonuclease activity A (161 aa).

This sequence belongs to the RraA family. In terms of assembly, homotrimer. Binds to both RNA-binding sites in the C-terminal region of Rne and to RhlB.

The protein resides in the cytoplasm. Globally modulates RNA abundance by binding to RNase E (Rne) and regulating its endonucleolytic activity. Can modulate Rne action in a substrate-dependent manner by altering the composition of the degradosome. Modulates RNA-binding and helicase activities of the degradosome. The protein is Regulator of ribonuclease activity A of Pectobacterium atrosepticum (strain SCRI 1043 / ATCC BAA-672) (Erwinia carotovora subsp. atroseptica).